Here is a 1191-residue protein sequence, read N- to C-terminus: Protogenin (1191 aa).

The signal sequence occupies residues 1–23 (MAPPVRPGMLPLLLLLLLPPLGS). 4 Ig-like domains span residues 24–124 (VPGV…AHLT), 126–216 (STIS…ASLT), 229–316 (PTII…ATLT), and 321–405 (PSFV…ARLT). Residues 24–943 (VPGVWSFSEL…YYHLDQKSMT (920 aa)) are Extracellular-facing. Disulfide bonds link Cys-54/Cys-107 and Cys-150/Cys-199. Asn-237 carries an N-linked (GlcNAc...) asparagine glycan. 2 disulfide bridges follow: Cys-250-Cys-298 and Cys-342-Cys-389. 5 consecutive Fibronectin type-III domains span residues 415-509 (APYN…TLED), 511-607 (PLRP…TPKA), 612-711 (APKS…VRDR), 718-811 (PPHH…TLPE), and 816-911 (PPVG…VLPK). A glycan (N-linked (GlcNAc...) asparagine) is linked at Asn-624. The helical transmembrane segment at 944 to 964 (GIAVGVGIALTCILICVLILI) threads the bilayer. Over 965–1191 (YRSKARKSSA…LRYAAEGFPV (227 aa)) the chain is Cytoplasmic. Disordered stretches follow at residues 975-1010 (SKTA…ETAE) and 1079-1191 (ISDE…GFPV). Positions 977–990 (TAQSGTQPLSQASA) are enriched in polar residues. A compositionally biased stretch (basic and acidic residues) spans 1104–1132 (DTEHSANSEGSHETGDSGRFSHESNDEIH). Polar residues-rich tracts occupy residues 1135–1146 (SVISSTPPTSNP) and 1171–1180 (EQTSAPQTSA).

Belongs to the immunoglobulin superfamily. DCC family. As to expression, from mid-gastrulation to early somite stages, restricted to posterior neural plate and mesoderm with an anterior limit at the level of the rhombencephalon. Posterior restriction is progressively lost during somitogenesis. Expression is maintained in the neural tube and paraxial mesoderm during this process. As development proceeds, further restricted to the dorsal parts of the spinal cord and somites. In parallel, expression progresses caudally during axis elongation.

It localises to the membrane. Its function is as follows. May play a role in anteroposterior axis elongation. The sequence is that of Protogenin from Mus musculus (Mouse).